The primary structure comprises 373 residues: tRNA pseudouridine synthase Pus10 (373 aa).

Catalysis depends on Asp-197, which acts as the Nucleophile. Residues Tyr-265 and Tyr-336 each coordinate substrate.

The protein belongs to the pseudouridine synthase Pus10 family.

The enzyme catalyses uridine(54) in tRNA = pseudouridine(54) in tRNA. The catalysed reaction is uridine(55) in tRNA = pseudouridine(55) in tRNA. Functionally, responsible for synthesis of pseudouridine from uracil-54 and uracil-55 in the psi GC loop of transfer RNAs. The polypeptide is tRNA pseudouridine synthase Pus10 (Korarchaeum cryptofilum (strain OPF8)).